The sequence spans 541 residues: Chaperonin GroEL 2 (541 aa).

ATP contacts are provided by residues 30–33 (TLGP), Lys51, 87–91 (DGTTT), Gly415, and Asp496.

Belongs to the chaperonin (HSP60) family. In terms of assembly, forms a cylinder of 14 subunits composed of two heptameric rings stacked back-to-back. Interacts with the co-chaperonin GroES.

The protein localises to the cytoplasm. It catalyses the reaction ATP + H2O + a folded polypeptide = ADP + phosphate + an unfolded polypeptide.. Its function is as follows. Together with its co-chaperonin GroES, plays an essential role in assisting protein folding. The GroEL-GroES system forms a nano-cage that allows encapsulation of the non-native substrate proteins and provides a physical environment optimized to promote and accelerate protein folding. The chain is Chaperonin GroEL 2 from Gluconacetobacter diazotrophicus (strain ATCC 49037 / DSM 5601 / CCUG 37298 / CIP 103539 / LMG 7603 / PAl5).